We begin with the raw amino-acid sequence, 428 residues long: MAIIEQVGAREILDSRGNPTVEVEIALDDGTLTRAAVPSGASTGEHEAVELRDGGDRYNGKGVLKAVEGVLDEIAPAVIGLDAVEQRTVDQVLLDLDGTPDKSRLGANALLGVSLAVARAAAESSGLELFRYLGGPNAHVLPVPMMNILNGGAHADTGVDVQEFMVAPIGAPTFKESLRWGAEVYHALKAVLKSKGLSTGLGDEGGFAPDVAGTREALDLIAQAIAKTGLKLGSDVALALDVAATEFYTSGSGYKFEGTVRSAEEMAQFYSELLGAYPLVSIEDPLSEDDWDGWVALTDQIGDKIQLVGDDLFVTNPERLEDGIAKGAANALLVKVNQIGTLTETLDAVELAHRNGYKTMMSHRSGETEDTTIADLAVAVGSGQIKTGAPARSERVAKYNQLLRIEDALGDSARYAGDVAFPRFVFDG.

Q162 is a binding site for (2R)-2-phosphoglycerate. The active-site Proton donor is the E204. Positions 241, 283, and 310 each coordinate Mg(2+). Positions 335, 364, 365, and 386 each coordinate (2R)-2-phosphoglycerate. Residue K335 is the Proton acceptor of the active site.

The protein belongs to the enolase family. Requires Mg(2+) as cofactor.

The protein resides in the cytoplasm. The protein localises to the secreted. Its subcellular location is the cell surface. It catalyses the reaction (2R)-2-phosphoglycerate = phosphoenolpyruvate + H2O. The protein operates within carbohydrate degradation; glycolysis; pyruvate from D-glyceraldehyde 3-phosphate: step 4/5. In terms of biological role, catalyzes the reversible conversion of 2-phosphoglycerate (2-PG) into phosphoenolpyruvate (PEP). It is essential for the degradation of carbohydrates via glycolysis. The polypeptide is Enolase (Nocardia farcinica (strain IFM 10152)).